The sequence spans 463 residues: MSLIVTRFAPSPTGYLHIGGLRTAIFNYLFARANQGKFFLRIEDTDLSRNSIEAANAIVEAFKWVGLEHDGEILYQSKRFEIYKEYIQKLLDEDKAYYCYMSKEELDALREEQKARKETPRYDNRYRDFKGTPPKGIEPVVRIKVPQNEVIGFNDGVKGEVKVNTNEIDDFIIARSDGTPTYNFVVTIDDALMGITDVIRGDDHLSNTPKQIVLYKALNFKIPNFFHVPMILNEEGQKLSKRHGATNVMDYQEMGYLKEALVNFLARLGWSYQDKEVFSMQELLEWFNPKDLNSSPSCFSWHKLNWLNAHYLKNQSVQELLKLLKPFSFSDLSHLNPAQLDRLLDALKERSQTLKELALKIDEVLTAPIEYEEKVFKKLNQALVMPLLEKFKLALDKTDFNDESALENAMHQIIEEEKIKAGHFMQPLRLALLGKGGGIGLKEALFILGKAESIKRIEEFLKN.

Residues P10–G20 carry the 'HIGH' region motif. The short motif at K238–R242 is the 'KMSKS' region element. Residue K241 participates in ATP binding.

Belongs to the class-I aminoacyl-tRNA synthetase family. Glutamate--tRNA ligase type 1 subfamily. As to quaternary structure, monomer.

It is found in the cytoplasm. The enzyme catalyses tRNA(Glu) + L-glutamate + ATP = L-glutamyl-tRNA(Glu) + AMP + diphosphate. Its function is as follows. Catalyzes the attachment of glutamate to tRNA(Glu) in a two-step reaction: glutamate is first activated by ATP to form Glu-AMP and then transferred to the acceptor end of tRNA(Glu). The sequence is that of Glutamate--tRNA ligase 1 from Helicobacter pylori (strain J99 / ATCC 700824) (Campylobacter pylori J99).